The chain runs to 31 residues: Cycloviolacin-O14 (31 aa).

Residues 1–31 (GSIPACGESCFKGKCYTPGCSCSKYPLCAKN) constitute a cross-link (cyclopeptide (Gly-Asn)). 3 disulfide bridges follow: Cys-6-Cys-20, Cys-10-Cys-22, and Cys-15-Cys-28.

This is a cyclic peptide. As to expression, expressed in leaves and petioles but not in petals, roots and runners (at protein level).

Functionally, probably participates in a plant defense mechanism. Has hemolytic activity. In Viola odorata (Sweet violet), this protein is Cycloviolacin-O14.